The chain runs to 1923 residues: Endoribonuclease Dicer (1923 aa).

Residues 51 to 227 (LLEAALDHNT…ELEEKIQKLE (177 aa)) enclose the Helicase ATP-binding domain. 64 to 71 (LNTGSGKT) serves as a coordination point for ATP. Residues 175 to 178 (DECH) carry the DECH box motif. The interval 256–595 (DCGPFTDRSG…LRNKCSKSVD (340 aa)) is required for interaction with PRKRA and TARBP2. Residues 410–433 (VSWSDSEDDEEDEEIEEKEKPETN) form a disordered region. 2 positions are modified to phosphoserine: serine 413 and serine 415. The span at 414 to 425 (DSEDDEEDEEIE) shows a compositional bias: acidic residues. In terms of domain architecture, Helicase C-terminal spans 433–602 (NFPSPFTNIL…SVDTGEADTE (170 aa)). A Dicer dsRNA-binding fold domain is found at 629-721 (AIGHVNRYCA…MPVGKETVKY (93 aa)). The PAZ domain maps to 894–1041 (KFMEDIEKSE…LVPELCAIHP (148 aa)). Phosphoserine is present on residues serine 1015 and serine 1160. Composition is skewed to polar residues over residues 1246 to 1255 (NANTSTSDGS) and 1277 to 1290 (SEQS…SRTL). The disordered stretch occupies residues 1246–1291 (NANTSTSDGSPVTAAVPGTTETGEAPPDRTASEQSPSPGYSSRTLG). Residues 1276-1404 (ASEQSPSPGY…TEKWEKDEMT (129 aa)) form the RNase III 1 domain. Glutamate 1316, glutamate 1396, and glutamate 1399 together coordinate Mg(2+). A phosphoserine mark is found at serine 1461, serine 1469, and serine 1471. One can recognise an RNase III 2 domain in the interval 1667-1825 (FENFEKKINY…LAGAIYMDSG (159 aa)). The Mg(2+) site is built by glutamate 1706, aspartate 1811, and glutamate 1814. The region spanning 1853-1915 (SPVRELLEME…ARRALRSLKA (63 aa)) is the DRBM domain. Position 1869 is a phosphoserine (serine 1869).

Belongs to the helicase family. Dicer subfamily. In terms of assembly, component of the RISC loading complex (RLC), or micro-RNA (miRNA) loading complex (miRLC), which is composed of DICER1, AGO2 and TARBP2; DICER1 and TARBP2 are required to process precursor miRNAs (pre-miRNAs) to mature miRNAs and then load them onto AGO2. Note that the trimeric RLC/miRLC is also referred to as RISC. Interacts with DHX9, AGO1, PIWIL1 and PRKRA. Interacts with AGO2, TARBP2, EIF6, MOV10 and RPL7A (60S ribosome subunit); they form a large RNA-induced silencing complex (RISC). Interacts with BCDIN3D. Interacts (via Dicer dsRNA-binding fold domain) with ALOX5 (via PLAT domain); this interaction enhances arachidonate 5-lipoxygenase activity and modifies the miRNA precursor processing activity of DICER1. It depends on Mg(2+) as a cofactor. Mn(2+) serves as cofactor.

It localises to the cytoplasm. It carries out the reaction Endonucleolytic cleavage to 5'-phosphomonoester.. Double-stranded RNA (dsRNA) endoribonuclease playing a central role in short dsRNA-mediated post-transcriptional gene silencing. Cleaves naturally occurring long dsRNAs and short hairpin pre-microRNAs (miRNA) into fragments of twenty-one to twenty-three nucleotides with 3' overhang of two nucleotides, producing respectively short interfering RNAs (siRNA) and mature microRNAs. SiRNAs and miRNAs serve as guide to direct the RNA-induced silencing complex (RISC) to complementary RNAs to degrade them or prevent their translation. Gene silencing mediated by siRNAs, also called RNA interference, controls the elimination of transcripts from mobile and repetitive DNA elements of the genome but also the degradation of exogenous RNA of viral origin for instance. The miRNA pathway on the other side is a mean to specifically regulate the expression of target genes. This Bos taurus (Bovine) protein is Endoribonuclease Dicer (DICER1).